The chain runs to 151 residues: Deoxyuridine 5'-triphosphate nucleotidohydrolase (151 aa).

Substrate contacts are provided by residues 70–72 (RSG), asparagine 83, 87–89 (LID), and methionine 97.

It belongs to the dUTPase family. Mg(2+) is required as a cofactor.

The catalysed reaction is dUTP + H2O = dUMP + diphosphate + H(+). The protein operates within pyrimidine metabolism; dUMP biosynthesis; dUMP from dCTP (dUTP route): step 2/2. This enzyme is involved in nucleotide metabolism: it produces dUMP, the immediate precursor of thymidine nucleotides and it decreases the intracellular concentration of dUTP so that uracil cannot be incorporated into DNA. The sequence is that of Deoxyuridine 5'-triphosphate nucleotidohydrolase from Hamiltonella defensa subsp. Acyrthosiphon pisum (strain 5AT).